We begin with the raw amino-acid sequence, 407 residues long: Argininosuccinate synthase (407 aa).

ATP contacts are provided by residues 16–24 (AYSGGLDTS) and A44. L-citrulline contacts are provided by Y96 and S101. G126 is an ATP binding site. Residues T128, N132, and D133 each coordinate L-aspartate. Residue N132 participates in L-citrulline binding. L-citrulline is bound by residues R136, S185, S194, E270, and Y282.

The protein belongs to the argininosuccinate synthase family. Type 1 subfamily. As to quaternary structure, homotetramer.

The protein resides in the cytoplasm. The enzyme catalyses L-citrulline + L-aspartate + ATP = 2-(N(omega)-L-arginino)succinate + AMP + diphosphate + H(+). Its pathway is amino-acid biosynthesis; L-arginine biosynthesis; L-arginine from L-ornithine and carbamoyl phosphate: step 2/3. This chain is Argininosuccinate synthase, found in Shewanella sp. (strain ANA-3).